The sequence spans 93 residues: Putative regulatory protein Fnod_1678 (93 aa).

Belongs to the RemA family.

This is Putative regulatory protein Fnod_1678 from Fervidobacterium nodosum (strain ATCC 35602 / DSM 5306 / Rt17-B1).